Reading from the N-terminus, the 280-residue chain is Thymidylate synthase (280 aa).

Residue Arg-21 coordinates dUMP. His-51 lines the (6R)-5,10-methylene-5,6,7,8-tetrahydrofolate pocket. 142 to 143 contacts dUMP; that stretch reads RR. Residue Cys-162 is the Nucleophile of the active site. DUMP is bound by residues 182 to 185, Asn-193, and 223 to 225; these read RSAD and HLY. Residue Asp-185 participates in (6R)-5,10-methylene-5,6,7,8-tetrahydrofolate binding. Ala-279 serves as a coordination point for (6R)-5,10-methylene-5,6,7,8-tetrahydrofolate.

This sequence belongs to the thymidylate synthase family. Bacterial-type ThyA subfamily. In terms of assembly, homodimer.

It localises to the cytoplasm. It catalyses the reaction dUMP + (6R)-5,10-methylene-5,6,7,8-tetrahydrofolate = 7,8-dihydrofolate + dTMP. Its pathway is pyrimidine metabolism; dTTP biosynthesis. Functionally, catalyzes the reductive methylation of 2'-deoxyuridine-5'-monophosphate (dUMP) to 2'-deoxythymidine-5'-monophosphate (dTMP) while utilizing 5,10-methylenetetrahydrofolate (mTHF) as the methyl donor and reductant in the reaction, yielding dihydrofolate (DHF) as a by-product. This enzymatic reaction provides an intracellular de novo source of dTMP, an essential precursor for DNA biosynthesis. This is Thymidylate synthase from Acinetobacter baylyi (strain ATCC 33305 / BD413 / ADP1).